The sequence spans 94 residues: Pyrimidine/purine nucleoside phosphorylase (94 aa).

This sequence belongs to the nucleoside phosphorylase PpnP family.

The catalysed reaction is a purine D-ribonucleoside + phosphate = a purine nucleobase + alpha-D-ribose 1-phosphate. It carries out the reaction adenosine + phosphate = alpha-D-ribose 1-phosphate + adenine. The enzyme catalyses cytidine + phosphate = cytosine + alpha-D-ribose 1-phosphate. It catalyses the reaction guanosine + phosphate = alpha-D-ribose 1-phosphate + guanine. The catalysed reaction is inosine + phosphate = alpha-D-ribose 1-phosphate + hypoxanthine. It carries out the reaction thymidine + phosphate = 2-deoxy-alpha-D-ribose 1-phosphate + thymine. The enzyme catalyses uridine + phosphate = alpha-D-ribose 1-phosphate + uracil. It catalyses the reaction xanthosine + phosphate = alpha-D-ribose 1-phosphate + xanthine. Catalyzes the phosphorolysis of diverse nucleosides, yielding D-ribose 1-phosphate and the respective free bases. Can use uridine, adenosine, guanosine, cytidine, thymidine, inosine and xanthosine as substrates. Also catalyzes the reverse reactions. The polypeptide is Pyrimidine/purine nucleoside phosphorylase (Aeromonas salmonicida (strain A449)).